A 218-amino-acid chain; its full sequence is Redox-sensing transcriptional repressor Rex (218 aa).

Residues 18–57 (LYYRFIQSLHASGKQRVSSAELSEAVKVDSATIRRDFSYF) constitute a DNA-binding region (H-T-H motif). 92–97 (GVGHLG) lines the NAD(+) pocket.

The protein belongs to the transcriptional regulatory Rex family. Homodimer.

The protein localises to the cytoplasm. Functionally, modulates transcription in response to changes in cellular NADH/NAD(+) redox state. The sequence is that of Redox-sensing transcriptional repressor Rex from Exiguobacterium sp. (strain ATCC BAA-1283 / AT1b).